Consider the following 109-residue polypeptide: Flagellar hook-basal body complex protein FliE 2 (109 aa).

This sequence belongs to the FliE family.

Its subcellular location is the bacterial flagellum basal body. The chain is Flagellar hook-basal body complex protein FliE 2 (fliE2) from Bradyrhizobium diazoefficiens (strain JCM 10833 / BCRC 13528 / IAM 13628 / NBRC 14792 / USDA 110).